The following is a 166-amino-acid chain: Small ribosomal subunit protein uS5 (166 aa).

One can recognise an S5 DRBM domain in the interval 11–74 (LQEKLIAVNR…EKARRNMITV (64 aa)).

The protein belongs to the universal ribosomal protein uS5 family. In terms of assembly, part of the 30S ribosomal subunit. Contacts proteins S4 and S8.

Its function is as follows. With S4 and S12 plays an important role in translational accuracy. Functionally, located at the back of the 30S subunit body where it stabilizes the conformation of the head with respect to the body. This is Small ribosomal subunit protein uS5 from Histophilus somni (strain 2336) (Haemophilus somnus).